We begin with the raw amino-acid sequence, 600 residues long: Integrator complex subunit 11 (600 aa).

Zn(2+) contacts are provided by His68, His70, Asp72, His73, His157, and Asp178. The HXHXDH motif signature appears at 68-73 (HFHLDH). Residue Glu203 is part of the active site. Lys381 participates in a covalent cross-link: Glycyl lysine isopeptide (Lys-Gly) (interchain with G-Cter in SUMO). Zn(2+) is bound at residue His414. Residues Lys462 and Lys475 each participate in a glycyl lysine isopeptide (Lys-Gly) (interchain with G-Cter in SUMO) cross-link. The short motif at 469 to 479 (LLPEAKKPRLL) is the Nuclear localization signal element.

The protein belongs to the metallo-beta-lactamase superfamily. RNA-metabolizing metallo-beta-lactamase-like family. INTS11 subfamily. In terms of assembly, component of the Integrator complex, composed of core subunits INTS1, INTS2, INTS3, INTS4, INTS5, INTS6, INTS7, INTS8, INTS9/RC74, INTS10, INTS11/CPSF3L, INTS12, INTS13, INTS14 and INTS15. The core complex associates with protein phosphatase 2A subunits PPP2CA and PPP2R1A, to form the Integrator-PP2A (INTAC) complex. INTS11 is part of the RNA endonuclease subcomplex, composed of INTS4, INTS9, INTS11 and inositol hexakisphosphate (InsP6). Interacts with WDR73; interaction is required for the assembly of the RNA endonuclease subcomplex in the cytoplasm. Interacts with BRAT1; interaction is required for the assembly of the RNA endonuclease subcomplex and inhibits the endonuclease activity of INTS11 before formation of mature integrator complex. Zn(2+) serves as cofactor. Post-translationally, sumoylated; sumoylation regulates its subcellular location and is required for integrator complex integrity.

It localises to the nucleus. It is found in the cytoplasm. With respect to regulation, the RNA endonuclease activity is inhibited by BRAT1 that forms hyrogen bond and hydrophobic interactions with the active site. Functionally, RNA endonuclease component of the integrator complex, a multiprotein complex that terminates RNA polymerase II (Pol II) transcription in the promoter-proximal region of genes. The integrator complex provides a quality checkpoint during transcription elongation by driving premature transcription termination of transcripts that are unfavorably configured for transcriptional elongation: the complex terminates transcription by (1) catalyzing dephosphorylation of the C-terminal domain (CTD) of Pol II subunit POLR2A/RPB1 and SUPT5H/SPT5, (2) degrading the exiting nascent RNA transcript via endonuclease activity and (3) promoting the release of Pol II from bound DNA. The integrator complex is also involved in terminating the synthesis of non-coding Pol II transcripts, such as enhancer RNAs (eRNAs), small nuclear RNAs (snRNAs), telomerase RNAs and long non-coding RNAs (lncRNAs). Within the integrator complex, INTS11 constitutes the RNA endonuclease subunit that degrades exiting nascent RNA transcripts. Mediates recruitment of cytoplasmic dynein to the nuclear envelope, probably as component of the integrator complex. The sequence is that of Integrator complex subunit 11 from Mus musculus (Mouse).